The sequence spans 368 residues: Glutamine synthetase root isozyme 2 (368 aa).

One can recognise a GS beta-grasp domain in the interval 19–99 (IIAEYIWVGG…VMCDCYEPNG (81 aa)). Positions 38-66 (RTLSGPVDDPSKLPKWNFDGSSTGQAPGD) are disordered. A GS catalytic domain is found at 106 to 368 (KRHGAAKIFS…NGDGKGAAAP (263 aa)).

It belongs to the glutamine synthetase family. Homooctamer. Found mainly in the vascular tissues of seedling roots.

The protein resides in the cytoplasm. It carries out the reaction L-glutamate + NH4(+) + ATP = L-glutamine + ADP + phosphate + H(+). Its function is as follows. Plays a role in the flow of nitrogen into nitrogenous organic compounds. The chain is Glutamine synthetase root isozyme 2 (GLN2) from Zea mays (Maize).